The chain runs to 397 residues: Odorant receptor 85a (397 aa).

The Cytoplasmic segment spans residues 1–46 (MIFKYIQEPVLGSLFRSRDSLIYLNRSIDQMGWRLPPRTKPYWWLY). The chain crosses the membrane as a helical span at residues 47-67 (YIWTLVVIVLVFIFIPYGLIM). The Extracellular segment spans residues 68–83 (TGIKEFKNFTTTDLFT). An N-linked (GlcNAc...) asparagine glycan is attached at N75. A helical transmembrane segment spans residues 84–104 (YVQVPVNTNASIMKGIIVLFM). The Cytoplasmic segment spans residues 105–142 (RRRFSRAQKMMDAMDIRCTKMEEKVQVHRAAALCNRVV). Residues 143–163 (VIYHCIYFGYLSMALTGALVI) form a helical membrane-spanning segment. The Extracellular portion of the chain corresponds to 164 to 192 (GKTPFCLYNPLVNPDDHFYLATAIESVTM). Residues 193 to 213 (AGIILANLILDVYPIIYVVVL) traverse the membrane as a helical segment. At 214–262 (RIHMELLSERIKTLRTDVEKGDDQHYAELVECVKDHKLIVEYGNTLRPM) the chain is on the cytoplasmic side. A helical transmembrane segment spans residues 263 to 283 (ISATMFIQLLSVGLLLGLAAV). At 284 to 294 (SMQFYNTVMER) the chain is on the extracellular side. A helical transmembrane segment spans residues 295–315 (VVSGVYTIAILSQTFPFCYVC). The Cytoplasmic portion of the chain corresponds to 316–347 (EQLSSDCESLTNTLFHSKWIGAERRYRTTMLY). The chain crosses the membrane as a helical span at residues 348–368 (FIHNVQQSILFTAGGIFPICL). Residues 369–397 (NTNIKMAKFAFSVVTIVNEMDLAEKLRRE) are Extracellular-facing.

It belongs to the insect chemoreceptor superfamily. Heteromeric odorant receptor channel (TC 1.A.69) family. Or2a subfamily. Interacts with Orco. Complexes exist early in the endomembrane system in olfactory sensory neurons (OSNs), coupling these complexes to the conserved ciliary trafficking pathway. Expressed in olfactory sensory neurons in the antenna.

Its subcellular location is the cell membrane. Its function is as follows. Odorant receptor which mediates acceptance or avoidance behavior, depending on its substrates. The odorant receptor repertoire encodes a large collection of odor stimuli that vary widely in identity, intensity, and duration. May form a complex with Orco to form odorant-sensing units, providing sensitive and prolonged odorant signaling and calcium permeability. This chain is Odorant receptor 85a (Or85a), found in Drosophila melanogaster (Fruit fly).